Consider the following 151-residue polypeptide: Immunity protein YezG (151 aa).

Residues 62 to 90 (KDIFKTLLRELRELFEELRTEHRNNNDDV) are a coiled coil.

Interacts with cognate toxin YeeF but not with non-cognate toxin YobL. The interaction probably inhibits the toxic activity of YeeF. May bind with a stoichiometry of 2:2 to YeeF.

It is found in the cytoplasm. Its function is as follows. Immunity component of one of 6 LXG toxin-immunity modules in this strain. They promote kin selection, mediate competition in biofilms, and drive spatial segregation of different strains, indicating that LXG toxins may help avoid warfare between strains in biofilms. Mediates intercellular competition during biofilm formation; disruption of the operon disadvantages the bacteria, but overexpression of the cognate immunity protein restores growth in competition with wild-type. In situ neutralizes the toxic effect of cognate toxin YeeF. Probably neutralizes the ability to inhibit growth of cognate toxin YeeF. Probably does not have immunity protein activity on other LXG toxins. This chain is Immunity protein YezG (yezG), found in Bacillus subtilis (strain 168).